The primary structure comprises 146 residues: Nitric oxide reductase subunit C (146 aa).

Residues 13-29 (IYFGGSVFFFLVFLGLT) form a helical; Signal-anchor membrane-spanning segment. 3 residues coordinate heme c: Cys61, Cys64, and His65.

Heterodimer of cytochromes b (large subunit) and c (small subunit).

The protein localises to the cell membrane. Its function is as follows. Component of the anaerobic respiratory chain that transforms nitrate to dinitrogen (denitrification). This is Nitric oxide reductase subunit C (norC) from Stutzerimonas stutzeri (Pseudomonas stutzeri).